The primary structure comprises 690 residues: Elongation factor G (690 aa).

The 276-residue stretch at 8–283 folds into the tr-type G domain; it reads SKCRNIGIMA…AVVDFLPAPN (276 aa). GTP is bound by residues 17–24, 81–85, and 135–138; these read AHIDAGKT, DTPGH, and NKMD.

This sequence belongs to the TRAFAC class translation factor GTPase superfamily. Classic translation factor GTPase family. EF-G/EF-2 subfamily.

It localises to the cytoplasm. In terms of biological role, catalyzes the GTP-dependent ribosomal translocation step during translation elongation. During this step, the ribosome changes from the pre-translocational (PRE) to the post-translocational (POST) state as the newly formed A-site-bound peptidyl-tRNA and P-site-bound deacylated tRNA move to the P and E sites, respectively. Catalyzes the coordinated movement of the two tRNA molecules, the mRNA and conformational changes in the ribosome. The sequence is that of Elongation factor G from Ehrlichia chaffeensis (strain ATCC CRL-10679 / Arkansas).